Consider the following 194-residue polypeptide: Peptidyl-tRNA hydrolase (194 aa).

Tyr17 serves as a coordination point for tRNA. The active-site Proton acceptor is His22. TRNA contacts are provided by Phe68, Asn70, and Asn116.

This sequence belongs to the PTH family. In terms of assembly, monomer.

Its subcellular location is the cytoplasm. The catalysed reaction is an N-acyl-L-alpha-aminoacyl-tRNA + H2O = an N-acyl-L-amino acid + a tRNA + H(+). In terms of biological role, hydrolyzes ribosome-free peptidyl-tRNAs (with 1 or more amino acids incorporated), which drop off the ribosome during protein synthesis, or as a result of ribosome stalling. Catalyzes the release of premature peptidyl moieties from peptidyl-tRNA molecules trapped in stalled 50S ribosomal subunits, and thus maintains levels of free tRNAs and 50S ribosomes. The protein is Peptidyl-tRNA hydrolase of Pasteurella multocida (strain Pm70).